We begin with the raw amino-acid sequence, 197 residues long: Phospholipid hydroperoxide glutathione peroxidase (197 aa).

A Phosphoserine modification is found at serine 40. The active site involves selenocysteine 73. A non-standard amino acid (selenocysteine) is located at residue selenocysteine 73.

This sequence belongs to the glutathione peroxidase family. In terms of assembly, monomer. Has a tendency to form higher mass oligomers. Interacts with FUNDC1; this interaction promotes GPX4 recruitment into mitochondria through TOM/TIM complex where it is degraded by mitophagy.

It localises to the mitochondrion. It is found in the cytoplasm. The enzyme catalyses a hydroperoxy polyunsaturated fatty acid + 2 glutathione = a hydroxy polyunsaturated fatty acid + glutathione disulfide + H2O. It carries out the reaction (12S)-hydroperoxy-(5Z,8Z,10E,14Z)-eicosatetraenoate + 2 glutathione = (12S)-hydroxy-(5Z,8Z,10E,14Z)-eicosatetraenoate + glutathione disulfide + H2O. It catalyses the reaction (13S)-hydroperoxy-(9Z,11E)-octadecadienoate + 2 glutathione = (13S)-hydroxy-(9Z,11E)-octadecadienoate + glutathione disulfide + H2O. Essential antioxidant peroxidase that directly reduces phospholipid hydroperoxide even if they are incorporated in membranes and lipoproteins. Can also reduce fatty acid hydroperoxide, cholesterol hydroperoxide and thymine hydroperoxide. Plays a key role in protecting cells from oxidative damage by preventing membrane lipid peroxidation. Required to prevent cells from ferroptosis, a non-apoptotic cell death resulting from an iron-dependent accumulation of lipid reactive oxygen species. The presence of selenocysteine (Sec) versus Cys at the active site is essential for life: it provides resistance to overoxidation and prevents cells against ferroptosis. The presence of Sec at the active site is also essential for the survival of a specific type of parvalbumin-positive interneurons, thereby preventing against fatal epileptic seizures. May be required to protect cells from the toxicity of ingested lipid hydroperoxides. Required for normal sperm development and male fertility. Essential for maturation and survival of photoreceptor cells. Plays a role in a primary T-cell response to viral and parasitic infection by protecting T-cells from ferroptosis and by supporting T-cell expansion. Plays a role of glutathione peroxidase in platelets in the arachidonic acid metabolism. Reduces hydroperoxy ester lipids formed by a 15-lipoxygenase that may play a role as down-regulator of the cellular 15-lipoxygenase pathway. This Sapajus apella (Brown-capped capuchin) protein is Phospholipid hydroperoxide glutathione peroxidase.